The following is a 190-amino-acid chain: Thiamine biosynthesis protein X (190 aa).

The first 22 residues, 1–22, serve as a signal peptide directing secretion; sequence MSISRTVFGIAATAALSAALVA. C23 is lipidated: N-palmitoyl cysteine. A lipid anchor (S-diacylglycerol cysteine) is attached at C23. The disordered stretch occupies residues 43–68; that stretch reads SQNPTSASSTSTSSATTTSSAPVEED. Residues 47-63 show a composition bias toward low complexity; sequence TSASSTSTSSATTTSSA.

It localises to the cell membrane. In terms of biological role, is necessary for biosynthesis of the 4-methyl-5-(beta-hydroxyethyl)thiazol component from which thiamine is formed. The protein is Thiamine biosynthesis protein X (thiX) of Corynebacterium glutamicum (strain ATCC 13032 / DSM 20300 / JCM 1318 / BCRC 11384 / CCUG 27702 / LMG 3730 / NBRC 12168 / NCIMB 10025 / NRRL B-2784 / 534).